A 121-amino-acid polypeptide reads, in one-letter code: Insertion element IS406 uncharacterized 13.3 kDa protein (121 aa).

The chain is Insertion element IS406 uncharacterized 13.3 kDa protein from Burkholderia multivorans (strain ATCC 17616 / 249).